Consider the following 462-residue polypeptide: Nitrate/nitrite transporter NarU (462 aa).

The Cytoplasmic segment spans residues 1–35; the sequence is MALQNEKNSRYLLRDWKPENPAFWENKGKHIARRN. The chain crosses the membrane as a helical span at residues 36–56; that stretch reads LWISVSCLLLAFCVWMLFSAV. At 57–76 the chain is on the periplasmic side; sequence TVNLNKIGFNFTTDQLFLLT. Residues 77–97 traverse the membrane as a helical segment; it reads ALPSVSGALLRVPYSFMVPIF. Residues 98–101 lie on the Cytoplasmic side of the membrane; it reads GGRR. A helical membrane pass occupies residues 102 to 122; it reads WTVFSTAILIIPCVWLGIAVQ. Topologically, residues 123-125 are periplasmic; it reads NPN. The chain crosses the membrane as a helical span at residues 126–146; it reads TPFGIFIVIALLCGFAGANFA. The Cytoplasmic segment spans residues 147-180; it reads SSMGNISFFFPKAKQGSALGINGGLGNLGVSVMQ. A helical membrane pass occupies residues 181 to 201; that stretch reads LVAPLVIFVPVFAFLGVNGVP. The Periplasmic segment spans residues 202–206; that stretch reads QADGS. A helical transmembrane segment spans residues 207 to 227; the sequence is VMSLANAAWIWVPLLAIATIA. Residues 228–258 lie on the Cytoplasmic side of the membrane; sequence AWSGMNDIASSRASIADQLPVLQRLHLWLLS. A helical transmembrane segment spans residues 259 to 279; it reads LLYLATFGSFIGFSAGFAMLA. Topologically, residues 280-287 are periplasmic; sequence KTQFPDVN. Residues 288 to 308 traverse the membrane as a helical segment; it reads ILRLAFFGPFIGAIARSVGGA. Over 309-317 the chain is Cytoplasmic; sequence ISDKFGGVR. A helical membrane pass occupies residues 318–338; it reads VTLINFIFMAIFSALLFLTLP. Topologically, residues 339–344 are periplasmic; sequence GTGSGN. Residues 345 to 365 traverse the membrane as a helical segment; the sequence is FIAFYAVFMGLFLTAGLGSGS. Residues 366–401 are Cytoplasmic-facing; that stretch reads TFQMIAVIFRQITIYRVKMKGGSDEQAHKEAVTETA. Residues 402–422 form a helical membrane-spanning segment; the sequence is AALGFISAIGAVGGFFIPQAF. At 423-432 the chain is on the periplasmic side; the sequence is GMSLNMTGSP. The helical transmembrane segment at 433–453 threads the bilayer; that stretch reads VGAMKVFLIFYIVCVLLTWLV. Residues 454–462 lie on the Cytoplasmic side of the membrane; it reads YGRRKFSQK.

The protein belongs to the major facilitator superfamily. Nitrate/nitrite porter (TC 2.A.1.8) family.

The protein resides in the cell inner membrane. Functionally, catalyzes nitrate uptake, nitrite uptake and nitrite export across the cytoplasmic membrane. May function as a nitrate/H(+) and nitrite/H(+) channel. Could confer a selective advantage during severe nutrient starvation or slow growth. The sequence is that of Nitrate/nitrite transporter NarU (narU) from Escherichia coli (strain K12).